The chain runs to 156 residues: Ribosomal RNA large subunit methyltransferase H (156 aa).

S-adenosyl-L-methionine contacts are provided by residues Leu73, Gly104, and 123 to 128; that span reads LSALTL.

This sequence belongs to the RNA methyltransferase RlmH family. Homodimer.

Its subcellular location is the cytoplasm. The enzyme catalyses pseudouridine(1915) in 23S rRNA + S-adenosyl-L-methionine = N(3)-methylpseudouridine(1915) in 23S rRNA + S-adenosyl-L-homocysteine + H(+). Functionally, specifically methylates the pseudouridine at position 1915 (m3Psi1915) in 23S rRNA. The chain is Ribosomal RNA large subunit methyltransferase H from Vibrio vulnificus (strain CMCP6).